A 70-amino-acid chain; its full sequence is Protein SlyX homolog (70 aa).

This sequence belongs to the SlyX family.

This Shewanella loihica (strain ATCC BAA-1088 / PV-4) protein is Protein SlyX homolog.